The sequence spans 647 residues: UvrABC system protein C (647 aa).

In terms of domain architecture, GIY-YIG spans 16–95 (VEPGVYRFRD…IKEFDPRFNV (80 aa)). Residues 208 to 243 (DRFARELEQQMNAAAAELDFERAARLRDDLGALKRA) form the UVR domain.

It belongs to the UvrC family. As to quaternary structure, interacts with UvrB in an incision complex.

It is found in the cytoplasm. In terms of biological role, the UvrABC repair system catalyzes the recognition and processing of DNA lesions. UvrC both incises the 5' and 3' sides of the lesion. The N-terminal half is responsible for the 3' incision and the C-terminal half is responsible for the 5' incision. The chain is UvrABC system protein C from Mycolicibacterium paratuberculosis (strain ATCC BAA-968 / K-10) (Mycobacterium paratuberculosis).